We begin with the raw amino-acid sequence, 415 residues long: G-protein coupled receptor daf-38 (415 aa).

The segment covering 1-19 (MLLPSNLTTSTLMTSSSES) has biased composition (low complexity). A disordered region spans residues 1 to 25 (MLLPSNLTTSTLMTSSSESYDADNP). Over 1 to 35 (MLLPSNLTTSTLMTSSSESYDADNPGLPPEPILSD) the chain is Extracellular. Residues 36-56 (YVEMFTLVLNFIVGAPLNLAA) form a helical membrane-spanning segment. Residues 57–75 (YTQLSERPTSTRLDLLKRS) are Cytoplasmic-facing. Residues 76-96 (LNYSDLLVLFIYVPSRACWLL) form a helical membrane-spanning segment. Residues 97-108 (TYDWRGGDALCK) are Extracellular-facing. An intrachain disulfide couples C107 to C187. A helical transmembrane segment spans residues 109 to 129 (IVKMFHTFAFQSSSNVIVCIA). At 130-152 (VDRLLSVLSPSHHSPNKALKRTK) the chain is on the cytoplasmic side. A helical membrane pass occupies residues 153–173 (MMLIVAWIVALVISCPQLFIW). The Extracellular portion of the chain corresponds to 174–222 (KAYLALPEYNWSQCLQIWEIARMEKFNKPQVVPEFDAEFWYSILHISLV). The helical transmembrane segment at 223–243 (FWIPCIIIMLSYIIVISWVWI) threads the bilayer. At 244-345 (NSRPSIRHTS…NLNRSRALRV (102 aa)) the chain is on the cytoplasmic side. A helical membrane pass occupies residues 346-366 (SLLLVVAYIICWLPYNLISLI). The Extracellular portion of the chain corresponds to 367 to 382 (QFLDRDFFSSYLKHVH). The helical transmembrane segment at 383–403 (FCQQLIIFNSVVNPWLYGFFG) threads the bilayer. The Cytoplasmic segment spans residues 404–415 (PRRPSTTGAGRH).

The protein belongs to the G-protein coupled receptor 1 family. As to quaternary structure, heterodimer; with daf-37. As to expression, expressed in the ASI and ASK chemosensory neurons and in the IL-2 interneurons, but weakly expressed in other head neurons in hermaphrodites.

The protein resides in the cell membrane. Functionally, G-protein coupled receptor (GPCR) that forms a heterodimer with daf-37 to control dauer formation and behavior. Required for the response to dauer inducing pheromones such as the ascarosides ascr#2, ascr#3 and ascr#5. The chain is G-protein coupled receptor daf-38 from Caenorhabditis elegans.